We begin with the raw amino-acid sequence, 246 residues long: Cell division protein ZapD (246 aa).

The protein belongs to the ZapD family. In terms of assembly, interacts with FtsZ.

The protein resides in the cytoplasm. Its function is as follows. Cell division factor that enhances FtsZ-ring assembly. Directly interacts with FtsZ and promotes bundling of FtsZ protofilaments, with a reduction in FtsZ GTPase activity. The sequence is that of Cell division protein ZapD from Vibrio parahaemolyticus serotype O3:K6 (strain RIMD 2210633).